A 356-amino-acid chain; its full sequence is D-amino-acid oxidase (356 aa).

The first 17 residues, M1–A17, serve as a signal peptide directing secretion. Residues A9, S44, G48, and N50 each contribute to the FAD site. Anthranilate is bound at residue F54. V171 serves as a coordination point for FAD. A glycan (N-linked (GlcNAc...) asparagine) is linked at N192. Y243 contributes to the anthranilate binding site. Y243 lines the (R)-lactate pocket. N262 is a glycosylation site (N-linked (GlcNAc...) asparagine). Positions 302, 329, 332, 333, and 334 each coordinate FAD. An anthranilate-binding site is contributed by R302. Residue R302 coordinates (R)-lactate.

The protein belongs to the DAMOX/DASOX family. Requires FAD as cofactor.

The protein localises to the peroxisome matrix. The enzyme catalyses a D-alpha-amino acid + O2 + H2O = a 2-oxocarboxylate + H2O2 + NH4(+). The catalysed reaction is D-alanine + O2 + H2O = pyruvate + H2O2 + NH4(+). It carries out the reaction D-serine + O2 + H2O = 3-hydroxypyruvate + H2O2 + NH4(+). It catalyses the reaction D-phenylalanine + O2 + H2O = 3-phenylpyruvate + H2O2 + NH4(+). The enzyme catalyses D-lysine + O2 + H2O = 6-amino-2-oxohexanoate + H2O2 + NH4(+). The catalysed reaction is D-tyrosine + O2 + H2O = 3-(4-hydroxyphenyl)pyruvate + H2O2 + NH4(+). It carries out the reaction D-methionine + O2 + H2O = 4-methylsulfanyl-2-oxobutanoate + H2O2 + NH4(+). It catalyses the reaction D-tryptophan + O2 + H2O = indole-3-pyruvate + H2O2 + NH4(+). The enzyme catalyses D-leucine + O2 + H2O = 4-methyl-2-oxopentanoate + H2O2 + NH4(+). The catalysed reaction is D-valine + O2 + H2O = 3-methyl-2-oxobutanoate + H2O2 + NH4(+). With respect to regulation, inhibited by benzoate and hypochlorite. Catalyzes the oxidative deamination of D-amino acids with broad substrate specificity. Enables the organism to utilize D-amino acids as a source of nutrients. This chain is D-amino-acid oxidase, found in Trigonopsis variabilis (Yeast).